The primary structure comprises 262 residues: Tryptophan synthase alpha chain (262 aa).

Active-site proton acceptor residues include Glu-48 and Asp-59.

It belongs to the TrpA family. In terms of assembly, tetramer of two alpha and two beta chains.

It catalyses the reaction (1S,2R)-1-C-(indol-3-yl)glycerol 3-phosphate + L-serine = D-glyceraldehyde 3-phosphate + L-tryptophan + H2O. It participates in amino-acid biosynthesis; L-tryptophan biosynthesis; L-tryptophan from chorismate: step 5/5. Its function is as follows. The alpha subunit is responsible for the aldol cleavage of indoleglycerol phosphate to indole and glyceraldehyde 3-phosphate. This chain is Tryptophan synthase alpha chain, found in Helicobacter pylori (strain G27).